Reading from the N-terminus, the 122-residue chain is NADH-quinone oxidoreductase subunit A (122 aa).

Helical transmembrane passes span 10-30 (LIIFVFLCLGVLLPIGALTAG), 67-87 (FALLFVIFDIETVFLYPWAVV), and 91-111 (LGLFALVEMIIFIVLLAIGLI).

Belongs to the complex I subunit 3 family. As to quaternary structure, NDH-1 is composed of 14 different subunits. Subunits NuoA, H, J, K, L, M, N constitute the membrane sector of the complex.

It is found in the cell membrane. It carries out the reaction a quinone + NADH + 5 H(+)(in) = a quinol + NAD(+) + 4 H(+)(out). In terms of biological role, NDH-1 shuttles electrons from NADH, via FMN and iron-sulfur (Fe-S) centers, to quinones in the respiratory chain. The immediate electron acceptor for the enzyme in this species is believed to be a menaquinone. Couples the redox reaction to proton translocation (for every two electrons transferred, four hydrogen ions are translocated across the cytoplasmic membrane), and thus conserves the redox energy in a proton gradient. The polypeptide is NADH-quinone oxidoreductase subunit A (Geobacillus kaustophilus (strain HTA426)).